We begin with the raw amino-acid sequence, 416 residues long: D-amino acid dehydrogenase (416 aa).

3-17 (ITILGSGVIGVTTAY) contributes to the FAD binding site.

The protein belongs to the DadA oxidoreductase family. Requires FAD as cofactor.

The enzyme catalyses a D-alpha-amino acid + A + H2O = a 2-oxocarboxylate + AH2 + NH4(+). Its pathway is amino-acid degradation; D-alanine degradation; NH(3) and pyruvate from D-alanine: step 1/1. Functionally, oxidative deamination of D-amino acids. The protein is D-amino acid dehydrogenase of Brucella canis (strain ATCC 23365 / NCTC 10854 / RM-666).